Here is an 824-residue protein sequence, read N- to C-terminus: A-adding tRNA nucleotidyltransferase (824 aa).

CBS domains are found at residues 305–363 (MNTP…DEPI) and 367–423 (VNRD…LEKL). Residue 459–462 (GVVR) coordinates ATP. The Mg(2+) site is built by Asp-472 and Asp-474. ATP is bound by residues 545 to 546 (RD), Asn-550, 590 to 599 (DPVRILRALR), Arg-603, and Arg-632.

This sequence belongs to the tRNA nucleotidyltransferase/poly(A) polymerase family. The cofactor is Mg(2+).

The enzyme catalyses a tRNA with a 3' CC end + ATP = a tRNA with a 3' CCA end + diphosphate. Functionally, tRNA nucleotidyltransferase involved in the synthesis of the tRNA CCA terminus. Adds the terminal adenosine residue to tRNA. Can incorporate CMP into tRNA ending with C74C75 (tRNACC), with very weak efficiency. This is A-adding tRNA nucleotidyltransferase from Aquifex aeolicus (strain VF5).